The following is a 429-amino-acid chain: Adenylosuccinate synthetase (429 aa).

Residues 12–18 and 40–42 each bind GTP; these read GDEGKGK and GHT. Catalysis depends on Asp13, which acts as the Proton acceptor. Mg(2+)-binding residues include Asp13 and Gly40. IMP contacts are provided by residues 13 to 16, 38 to 41, Thr128, Arg142, Gln223, Thr238, and Arg302; these read DEGK and NAGH. His41 (proton donor) is an active-site residue. 298 to 304 serves as a coordination point for substrate; the sequence is TVTGRPR. GTP contacts are provided by residues Arg304, 330–332, and 412–414; these read LLD and SVG.

The protein belongs to the adenylosuccinate synthetase family. In terms of assembly, homodimer. Mg(2+) serves as cofactor.

The protein localises to the cytoplasm. It carries out the reaction IMP + L-aspartate + GTP = N(6)-(1,2-dicarboxyethyl)-AMP + GDP + phosphate + 2 H(+). Its pathway is purine metabolism; AMP biosynthesis via de novo pathway; AMP from IMP: step 1/2. In terms of biological role, plays an important role in the de novo pathway of purine nucleotide biosynthesis. Catalyzes the first committed step in the biosynthesis of AMP from IMP. The polypeptide is Adenylosuccinate synthetase (Lactobacillus helveticus (strain DPC 4571)).